The primary structure comprises 131 residues: Monothiol glutaredoxin-S6 (131 aa).

Residues 31-131 (SAFVQNAIYS…KLLGNSQSQR (101 aa)) enclose the Glutaredoxin domain. A [2Fe-2S] cluster-binding site is contributed by cysteine 51.

Belongs to the glutaredoxin family. CPYC subfamily.

The protein localises to the cytoplasm. May only reduce GSH-thiol disulfides, but not protein disulfides. The chain is Monothiol glutaredoxin-S6 (GRXS6) from Oryza sativa subsp. japonica (Rice).